A 942-amino-acid polypeptide reads, in one-letter code: PH and SEC7 domain-containing protein C11E3.11c (942 aa).

Polar residues predominate over residues 1–18; it reads MSRNASNAYLKNGNSTPS. 2 disordered regions span residues 1–128 and 259–308; these read MSRN…TRLN and SRNL…ETTR. Residues 24–40 show a composition bias toward low complexity; it reads PSSLSQRSKTSTRSSKP. Composition is skewed to polar residues over residues 50 to 60, 90 to 125, 271 to 284, and 292 to 305; these read WFKNESSSRHP, ASMS…SSRT, YGNS…SSNY, and NRQS…STSE. An SEC7 domain is found at 295-497; it reads SSLSIPKSTS…LSSYKSFASN (203 aa). Positions 681–804 constitute a PH domain; sequence PYIKQGILKF…WIDALNYWAA (124 aa).

This Schizosaccharomyces pombe (strain 972 / ATCC 24843) (Fission yeast) protein is PH and SEC7 domain-containing protein C11E3.11c.